A 277-amino-acid chain; its full sequence is MFVVHSMRLFTGASFRRNLMTSRRLSRKSCLSDSSTLEYSFSLYNKYCVTKKLKIKTICSFIYYYLTITISTIKNSTMSAKHLRPNITHIPVKRSYANILYFGRSAQLLETDRNAGWTKAHETACNGNLEDYEEEYKEMDKHEIDVRDGFGQTPMWIATTRCNYRNYVFLKKHGSDLHQKDYQGRSLLHATANAVNSECLDIFKDLIANGVDLYQKDMVGSTAIDELKHENSIINYETEGTLLVTNFFIFLYKFTYKFIKKLLTICYCIFSIHFFSL.

2 ANK repeats span residues 150-179 and 183-215; these read FGQT…DLHQ and QGRS…DLYQ.

In Acanthamoeba polyphaga (Amoeba), this protein is Putative ankyrin repeat protein L81.